The primary structure comprises 72 residues: U10-myrmicitoxin-Tb1a (72 aa).

A signal peptide spans 1 to 26; it reads MRVSYLSLTLTIVVVIAIIYAPETEA. Positions 27–36 are excised as a propeptide; it reads KAWADADAEA.

This sequence belongs to the formicidae venom precursor-01 superfamily. As to expression, expressed by the venom gland.

Its subcellular location is the secreted. Its function is as follows. In vivo, this neurotoxin paralyzes about 40% of blowflies (L.caesar) one hour after intrathoracic injection, when tested at high doses (28 nmol/g). The protein is U10-myrmicitoxin-Tb1a of Tetramorium bicarinatum (Tramp ant).